We begin with the raw amino-acid sequence, 257 residues long: Imidazole glycerol phosphate synthase subunit HisF (257 aa).

Active-site residues include Asp12 and Asp131.

This sequence belongs to the HisA/HisF family. As to quaternary structure, heterodimer of HisH and HisF.

The protein resides in the cytoplasm. The enzyme catalyses 5-[(5-phospho-1-deoxy-D-ribulos-1-ylimino)methylamino]-1-(5-phospho-beta-D-ribosyl)imidazole-4-carboxamide + L-glutamine = D-erythro-1-(imidazol-4-yl)glycerol 3-phosphate + 5-amino-1-(5-phospho-beta-D-ribosyl)imidazole-4-carboxamide + L-glutamate + H(+). It functions in the pathway amino-acid biosynthesis; L-histidine biosynthesis; L-histidine from 5-phospho-alpha-D-ribose 1-diphosphate: step 5/9. IGPS catalyzes the conversion of PRFAR and glutamine to IGP, AICAR and glutamate. The HisF subunit catalyzes the cyclization activity that produces IGP and AICAR from PRFAR using the ammonia provided by the HisH subunit. This is Imidazole glycerol phosphate synthase subunit HisF from Rhodococcus erythropolis (strain PR4 / NBRC 100887).